Reading from the N-terminus, the 462-residue chain is Bifunctional protein GlmU (462 aa).

The pyrophosphorylase stretch occupies residues 1–239 (MTESVSKPVR…EASVQGVNAQ (239 aa)). Residues 17–20 (LAAG), Lys-31, Gln-84, and 89–90 (GT) each bind UDP-N-acetyl-alpha-D-glucosamine. A Mg(2+)-binding site is contributed by Asp-114. Positions 150, 165, 180, and 237 each coordinate UDP-N-acetyl-alpha-D-glucosamine. Asn-237 contacts Mg(2+). Positions 240 to 260 (AELAAAEAVWQQNRRKALMVD) are linker. An N-acetyltransferase region spans residues 261–462 (GVTMPAPDTV…QKDKKKDKKA (202 aa)). UDP-N-acetyl-alpha-D-glucosamine is bound by residues Arg-326 and Lys-344. His-356 functions as the Proton acceptor in the catalytic mechanism. UDP-N-acetyl-alpha-D-glucosamine contacts are provided by Tyr-359 and Asn-370. Acetyl-CoA contacts are provided by residues Ala-373, 379 to 380 (NY), Ser-398, Ser-416, and Arg-433.

The protein in the N-terminal section; belongs to the N-acetylglucosamine-1-phosphate uridyltransferase family. This sequence in the C-terminal section; belongs to the transferase hexapeptide repeat family. In terms of assembly, homotrimer. Mg(2+) serves as cofactor.

The protein localises to the cytoplasm. It catalyses the reaction alpha-D-glucosamine 1-phosphate + acetyl-CoA = N-acetyl-alpha-D-glucosamine 1-phosphate + CoA + H(+). The enzyme catalyses N-acetyl-alpha-D-glucosamine 1-phosphate + UTP + H(+) = UDP-N-acetyl-alpha-D-glucosamine + diphosphate. It participates in nucleotide-sugar biosynthesis; UDP-N-acetyl-alpha-D-glucosamine biosynthesis; N-acetyl-alpha-D-glucosamine 1-phosphate from alpha-D-glucosamine 6-phosphate (route II): step 2/2. The protein operates within nucleotide-sugar biosynthesis; UDP-N-acetyl-alpha-D-glucosamine biosynthesis; UDP-N-acetyl-alpha-D-glucosamine from N-acetyl-alpha-D-glucosamine 1-phosphate: step 1/1. It functions in the pathway bacterial outer membrane biogenesis; LPS lipid A biosynthesis. Catalyzes the last two sequential reactions in the de novo biosynthetic pathway for UDP-N-acetylglucosamine (UDP-GlcNAc). The C-terminal domain catalyzes the transfer of acetyl group from acetyl coenzyme A to glucosamine-1-phosphate (GlcN-1-P) to produce N-acetylglucosamine-1-phosphate (GlcNAc-1-P), which is converted into UDP-GlcNAc by the transfer of uridine 5-monophosphate (from uridine 5-triphosphate), a reaction catalyzed by the N-terminal domain. The polypeptide is Bifunctional protein GlmU (Caulobacter vibrioides (strain ATCC 19089 / CIP 103742 / CB 15) (Caulobacter crescentus)).